The chain runs to 535 residues: Probable glucomannan 4-beta-mannosyltransferase 14 (535 aa).

The chain crosses the membrane as a helical span at residues 42–62; sequence QVVSVLLFVDAAYMAIVVAIV. The active site involves D131. The substrate site is built by D193 and D195. D287 is an active-site residue. Transmembrane regions (helical) follow at residues 366 to 386, 403 to 423, 482 to 502, and 503 to 523; these read IVVHIFTFVFYCVILPATVIF, ITILNAIATPKSFYLILYWIL, IMVGMYLFICGYYDFVFGRTY, and LYVYLFLQSIAFFVVGVGYVG.

Belongs to the glycosyltransferase 2 family. Plant cellulose synthase-like A subfamily.

Its subcellular location is the golgi apparatus membrane. It carries out the reaction GDP-mannose + (glucomannan)n = GDP + (glucomannan)n+1.. Functionally, probable mannan synthase which consists of a 4-beta-mannosyltransferase activity on mannan using GDP-mannose. The beta-1,4-mannan product is the backbone for galactomannan synthesis by galactomannan galactosyltransferase. Galactomannan is a noncellulosic polysaccharides of plant cell wall. The chain is Probable glucomannan 4-beta-mannosyltransferase 14 from Arabidopsis thaliana (Mouse-ear cress).